We begin with the raw amino-acid sequence, 452 residues long: Transcription factor AP-2-delta (452 aa).

The residue at position 239 (S239) is a Phosphoserine; by PKA. The tract at residues 280–410 (RRKAANVTLL…VLSEMLNYLE (131 aa)) is H-S-H (helix-span-helix), dimerization. The segment at 416–452 (KNGGAADSGQGHANSEKAPLRKASEAAVKEGKTEKTD) is disordered. A compositionally biased stretch (basic and acidic residues) spans 429-452 (NSEKAPLRKASEAAVKEGKTEKTD).

This sequence belongs to the AP-2 family. Binds DNA as a dimer. Can form homodimers or heterodimers with other AP-2 family members. Expressed in both embryonic and newborn brain.

It is found in the nucleus. Its function is as follows. Sequence-specific DNA-binding protein that interacts with inducible viral and cellular enhancer elements to regulate transcription of selected genes. AP-2 factors bind to the consensus sequence 5'-GCCNNNGGC-3' and activate genes involved in a large spectrum of important biological functions including proper eye, face, body wall, limb and neural tube development. They also suppress a number of genes including MCAM/MUC18, C/EBP alpha and MYC. The protein is Transcription factor AP-2-delta (Tfap2d) of Mus musculus (Mouse).